Here is a 1210-residue protein sequence, read N- to C-terminus: DNA-directed RNA polymerase II subunit RPB2 (1210 aa).

D826 provides a ligand contact to Mg(2+). The Zn(2+) site is built by C1152, C1155, C1170, and C1173. The C4-type zinc-finger motif lies at 1152-1173 (CDICGLIAIASYKKDSYECRSC).

This sequence belongs to the RNA polymerase beta chain family. In terms of assembly, component of the RNA polymerase II (Pol II) complex consisting of 12 subunits.

Its subcellular location is the nucleus. The catalysed reaction is RNA(n) + a ribonucleoside 5'-triphosphate = RNA(n+1) + diphosphate. Functionally, DNA-dependent RNA polymerase catalyzes the transcription of DNA into RNA using the four ribonucleoside triphosphates as substrates. Second largest component of RNA polymerase II which synthesizes mRNA precursors and many functional non-coding RNAs. Proposed to contribute to the polymerase catalytic activity and forms the polymerase active center together with the largest subunit. Pol II is the central component of the basal RNA polymerase II transcription machinery. It is composed of mobile elements that move relative to each other. RPB2 is part of the core element with the central large cleft, the clamp element that moves to open and close the cleft and the jaws that are thought to grab the incoming DNA template. The polypeptide is DNA-directed RNA polymerase II subunit RPB2 (rpb2) (Schizosaccharomyces pombe (strain 972 / ATCC 24843) (Fission yeast)).